A 245-amino-acid polypeptide reads, in one-letter code: MSQPGRVDKQPGYILHTQPYRETSLLLEVLSRDHGRFSLVARSARRPRSDLRGVLLPFQPLTLSWFGKGELRTLHAADWDGGVRALTGLPLVCGFYLNELMMKLTARDDPEPRAFSVYDRAVRELAGGAPLSTALRRYELRLAQVLGYAPALSRDSRGEAIAADRHYLCRDAALPEPDEHPELAPVGRVVRLPGEALLALDADDYREPATRGHARLLSRVWLSALLGDEPLASRQLLQAIQSLSD.

Belongs to the RecO family.

In terms of biological role, involved in DNA repair and RecF pathway recombination. This chain is DNA repair protein RecO, found in Chromobacterium violaceum (strain ATCC 12472 / DSM 30191 / JCM 1249 / CCUG 213 / NBRC 12614 / NCIMB 9131 / NCTC 9757 / MK).